Consider the following 263-residue polypeptide: H-2 class II histocompatibility antigen, A-U beta chain (263 aa).

Residues 1 to 27 form the signal peptide; the sequence is MALQIPSLLLLAAVVVLMVLSSPGTEG. The beta-1 stretch occupies residues 28 to 120; it reads GDSERHFVVQ…TEVPTSLRRL (93 aa). The Extracellular segment spans residues 28 to 224; sequence GDSERHFVVQ…RAQSESARSK (197 aa). Cystine bridges form between cysteine 42-cysteine 104 and cysteine 143-cysteine 199. An N-linked (GlcNAc...) asparagine glycan is attached at asparagine 46. Positions 121 to 214 are beta-2; that stretch reads EQPNVVISLS…SLKSPITVEW (94 aa). One can recognise an Ig-like C1-type domain in the interval 123 to 211; it reads PNVVISLSRT…EHPSLKSPIT (89 aa). A connecting peptide region spans residues 215–224; the sequence is RAQSESARSK. Residues 225-245 traverse the membrane as a helical segment; the sequence is MLSGIGGCVLGVIFLGLGLFI. The Cytoplasmic portion of the chain corresponds to 246–263; it reads RHRSQKGPRGPPPAGLLQ.

It belongs to the MHC class II family.

It localises to the membrane. This is H-2 class II histocompatibility antigen, A-U beta chain from Mus musculus (Mouse).